We begin with the raw amino-acid sequence, 415 residues long: Alpha-N-acetylgalactosaminidase (415 aa).

The first 17 residues, 1–17 (MLQKTVLLLALVAQVLM), serve as a signal peptide directing secretion. Cystine bridges form between Cys-38–Cys-80, Cys-42–Cys-49, and Cys-127–Cys-158. Residues 78-79 (DD) and Lys-154 each bind substrate. Asp-156 (nucleophile) is an active-site residue. A glycan (N-linked (GlcNAc...) asparagine) is linked at Asn-177. Cys-187 and Cys-209 are disulfide-bonded. Substrate is bound at residue Ser-188. N-linked (GlcNAc...) asparagine glycosylation occurs at Asn-201. 2 residues coordinate substrate: Arg-213 and Asp-217. Residue Asp-217 is the Proton donor of the active site. A phosphoserine mark is found at Ser-322 and Ser-332. N-linked (GlcNAc...) asparagine glycosylation is present at Asn-385.

The protein belongs to the glycosyl hydrolase 27 family. Homodimer.

Its subcellular location is the lysosome. The catalysed reaction is Cleavage of non-reducing alpha-(1-&gt;3)-N-acetylgalactosamine residues from human blood group A and AB mucin glycoproteins, Forssman hapten and blood group A lacto series glycolipids.. The enzyme catalyses a neolactoside IV(3)-alpha-GalNAc,IV(2)-alpha-Fuc-nLc4Cer(d18:1(4E)) + H2O = a neolactoside IV(2)-alpha-Fuc-nLc4Cer(d18:1(4E)) + N-acetyl-alpha-D-galactosamine. It carries out the reaction a neolactoside IV(3)-alpha-GalNAc,IV(2)-alpha-Fuc-nLc4Cer(d18:0) + H2O = a neolactoside IV(2)-alpha-Fuc-nLc4Cer(d18:0) + N-acetyl-alpha-D-galactosamine. It catalyses the reaction a globoside IV3GalNAc-Gb4Cer + H2O = N-acetyl-alpha-D-galactosamine + a globoside Gb4Cer. Functionally, removes terminal alpha-N-acetylgalactosamine residues from glycolipids and glycopeptides. Required for the breakdown of glycolipids. The protein is Alpha-N-acetylgalactosaminidase (Naga) of Mus musculus (Mouse).